Consider the following 940-residue polypeptide: MDKIEVRGARTHNLKNINLVIPRDKLIVVTGLSGSGKSSLAFDTLYAEGQRRYVESLSAYARQFLSLMEKPDVDHIEGLSPAISIEQKSTSHNPRSTVGTITEIHDYLRLLYARVGEPRCPDHDVPLAAQTVSQMVDNVLSQPEGKRLMLLAPIIKERKGEHTKTLENLASQGYIRARIDGEVCDLSDPPKLELQKKHTIEVVVDRFKVRDDLTQRLAESFETALELSGGTAVVADMDDPKAEELLFSANFACPICGYSMRELEPRLFSFNNPAGACPTCDGLGVQQYFDPDRVIQNPELSLAGGAIRGWDRRNFYYFQMLKSLADHYKFDVEAPWGSLSANVHKVVLYGSGKENIEFKYMNDRGDTSIRRHPFEGVLHNMERRYKETESSAVREELAKFISNRPCASCEGTRLRREARHVYVENTPLPAISDMSIGHAMEFFNNLKLAGQRAKIAEKILKEIGDRLKFLVNVGLNYLTLSRSAETLSGGEAQRIRLASQIGAGLVGVMYVLDEPSIGLHQRDNERLLGTLIHLRDLGNTVIVVEHDEDAIRAADHVIDIGPGAGVHGGEVVAEGPLEAIMAVPESLTGQYMSGKRKIEVPKKRVPANPEKVLKLTGARGNNLKDVTLTLPVGLFTCITGVSGSGKSTLINDTLFPIAQRQLNGATIAEPAPYRDIQGLEHFDKVIDIDQSPIGRTPRSNPATYTGVFTPVRELFAGVPESRARGYTPGRFSFNVRGGRCEACQGDGVIKVEMHFLPDIYVPCDQCKGKRYNRETLEIKYKGKTIHEVLDMTIEEAREFFDAVPALARKLQTLMDVGLTYIRLGQSATTLSGGEAQRVKLARELSKRGTGQTLYILDEPTTGLHFADIQQLLDVLHKLRDQGNTIVVIEHNLDVIKTADWIVDLGPEGGSGGGEILVSGTPETVAECKASHTARFLKPML.

31–38 (GLSGSGKS) lines the ATP pocket. The C4-type zinc finger occupies 253-280 (CPICGYSMRELEPRLFSFNNPAGACPTC). 2 ABC transporter domains span residues 310–587 (WDRR…PESL) and 607–937 (ANPE…RFLK). 640 to 647 (GVSGSGKS) is an ATP binding site. Residues 740–766 (CEACQGDGVIKVEMHFLPDIYVPCDQC) form a C4-type zinc finger.

This sequence belongs to the ABC transporter superfamily. UvrA family. As to quaternary structure, forms a heterotetramer with UvrB during the search for lesions.

It localises to the cytoplasm. Its function is as follows. The UvrABC repair system catalyzes the recognition and processing of DNA lesions. UvrA is an ATPase and a DNA-binding protein. A damage recognition complex composed of 2 UvrA and 2 UvrB subunits scans DNA for abnormalities. When the presence of a lesion has been verified by UvrB, the UvrA molecules dissociate. The chain is UvrABC system protein A from Escherichia coli O6:H1 (strain CFT073 / ATCC 700928 / UPEC).